Consider the following 348-residue polypeptide: MINIDGSYGEGGGQVLRTSLSLAAITGEPIRIAGIRAGRRKPGLAAQHLTAVRAAARICHGELQGDALGSTMLEFIPGGGVKAGNYIFDVSEVQQGGSAGAITLVLQTILLPLALADGDSHITLRGGTHVIFSPTVTYIERVYLPMLCRMGIKAQVKLGAWGWYPRGGGEVNLQVKGGCQLCGLNLLERGELKRVQGLAVATELPAHIPQRMANRAENLLRTAGLRVSMQALREKGVAPGAGIFLTAEYCNSLTGFGGFGRLRLSSEKVAEIACGQLLQFHETGAPVDEHLADQLLLPAVLASESSQYKVAEVSTHLTTNAAVIEKFGLGKITVNQAERVVAIASSKV.

Residues glutamine 107 and 290 to 294 (HLADQ) each bind ATP. Histidine 316 functions as the Tele-AMP-histidine intermediate in the catalytic mechanism.

It belongs to the RNA 3'-terminal cyclase family. Type 1 subfamily.

The protein resides in the cytoplasm. The enzyme catalyses a 3'-end 3'-phospho-ribonucleotide-RNA + ATP = a 3'-end 2',3'-cyclophospho-ribonucleotide-RNA + AMP + diphosphate. Catalyzes the conversion of 3'-phosphate to a 2',3'-cyclic phosphodiester at the end of RNA. The mechanism of action of the enzyme occurs in 3 steps: (A) adenylation of the enzyme by ATP; (B) transfer of adenylate to an RNA-N3'P to produce RNA-N3'PP5'A; (C) and attack of the adjacent 2'-hydroxyl on the 3'-phosphorus in the diester linkage to produce the cyclic end product. The biological role of this enzyme is unknown but it is likely to function in some aspects of cellular RNA processing. In Nostoc sp. (strain PCC 7120 / SAG 25.82 / UTEX 2576), this protein is RNA 3'-terminal phosphate cyclase (rtcA).